Consider the following 191-residue polypeptide: MPPKFWIIIIVKKIDQQSLENAYRLFESGDIHQIEIGSTKGLQQIHHYLFNGLYEFAGKIREQNISKGHFRFANALYLKEALGKIEQMPEDTFENIINKYVEMNIAHPFLEGNGRSTRIWLDLVLKKHLGKVVNWQNVDKTQYLQAMERSPINDLEIRFLLQANLTDDVNNREIIFKGIEQSYYYEGYEKE.

The region spanning 37–162 is the Fido domain; it reads GSTKGLQQIH…NDLEIRFLLQ (126 aa). Residues 67–68, 112–114, Arg118, and Gln145 contribute to the ATP site; these read KG and GNG.

This sequence belongs to the fic family.

The catalysed reaction is L-tyrosyl-[protein] + ATP = O-(5'-adenylyl)-L-tyrosyl-[protein] + diphosphate. It carries out the reaction L-threonyl-[protein] + ATP = 3-O-(5'-adenylyl)-L-threonyl-[protein] + diphosphate. Probable adenylyltransferase that mediates the addition of adenosine 5'-monophosphate (AMP) to specific residues of target proteins. This is Probable protein adenylyltransferase HI_0977 from Haemophilus influenzae (strain ATCC 51907 / DSM 11121 / KW20 / Rd).